The sequence spans 121 residues: Large ribosomal subunit protein uL18 (121 aa).

The protein belongs to the universal ribosomal protein uL18 family. In terms of assembly, part of the 50S ribosomal subunit; part of the 5S rRNA/L5/L18/L25 subcomplex. Contacts the 5S and 23S rRNAs.

This is one of the proteins that bind and probably mediate the attachment of the 5S RNA into the large ribosomal subunit, where it forms part of the central protuberance. In Mesomycoplasma hyopneumoniae (strain 232) (Mycoplasma hyopneumoniae), this protein is Large ribosomal subunit protein uL18.